Consider the following 159-residue polypeptide: 6,7-dimethyl-8-ribityllumazine synthase (159 aa).

5-amino-6-(D-ribitylamino)uracil-binding positions include F22, 57–59 (TYE), and 81–83 (TII). (2S)-2-hydroxy-3-oxobutyl phosphate is bound at residue 86–87 (ST). The active-site Proton donor is H89. M114 lines the 5-amino-6-(D-ribitylamino)uracil pocket. A (2S)-2-hydroxy-3-oxobutyl phosphate-binding site is contributed by R128.

It belongs to the DMRL synthase family. Forms an icosahedral capsid composed of 60 subunits, arranged as a dodecamer of pentamers.

It catalyses the reaction (2S)-2-hydroxy-3-oxobutyl phosphate + 5-amino-6-(D-ribitylamino)uracil = 6,7-dimethyl-8-(1-D-ribityl)lumazine + phosphate + 2 H2O + H(+). Its pathway is cofactor biosynthesis; riboflavin biosynthesis; riboflavin from 2-hydroxy-3-oxobutyl phosphate and 5-amino-6-(D-ribitylamino)uracil: step 1/2. Catalyzes the formation of 6,7-dimethyl-8-ribityllumazine by condensation of 5-amino-6-(D-ribitylamino)uracil with 3,4-dihydroxy-2-butanone 4-phosphate. This is the penultimate step in the biosynthesis of riboflavin. The polypeptide is 6,7-dimethyl-8-ribityllumazine synthase (Buchnera aphidicola subsp. Schizaphis graminum (strain Sg)).